Reading from the N-terminus, the 421-residue chain is Imidazolonepropionase (421 aa).

Residues H81 and H83 each contribute to the Fe(3+) site. Residues H81 and H83 each coordinate Zn(2+). Residues R90, Y153, and H186 each contribute to the 4-imidazolone-5-propanoate site. Residue Y153 coordinates N-formimidoyl-L-glutamate. H251 provides a ligand contact to Fe(3+). Residue H251 participates in Zn(2+) binding. Residue E254 coordinates 4-imidazolone-5-propanoate. D326 contacts Fe(3+). D326 is a Zn(2+) binding site. N328 and G330 together coordinate N-formimidoyl-L-glutamate. S331 is a binding site for 4-imidazolone-5-propanoate.

It belongs to the metallo-dependent hydrolases superfamily. HutI family. It depends on Zn(2+) as a cofactor. Fe(3+) is required as a cofactor.

The protein resides in the cytoplasm. The catalysed reaction is 4-imidazolone-5-propanoate + H2O = N-formimidoyl-L-glutamate. It participates in amino-acid degradation; L-histidine degradation into L-glutamate; N-formimidoyl-L-glutamate from L-histidine: step 3/3. In terms of biological role, catalyzes the hydrolytic cleavage of the carbon-nitrogen bond in imidazolone-5-propanoate to yield N-formimidoyl-L-glutamate. It is the third step in the universal histidine degradation pathway. The protein is Imidazolonepropionase of Streptococcus pyogenes serotype M18 (strain MGAS8232).